We begin with the raw amino-acid sequence, 107 residues long: U1-lycotoxin-Ls1l (107 aa).

An N-terminal signal peptide occupies residues 1–20 (MMKVLVVVALLVTLISYSSS). Residues 21–41 (EGIDDLEADELLSLMANEQTR) constitute a propeptide that is removed on maturation. Disulfide bonds link Cys44–Cys59, Cys51–Cys68, Cys58–Cys86, and Cys70–Cys84.

The protein belongs to the neurotoxin 19 (CSTX) family. 04 (U1-Lctx) subfamily. Expressed by the venom gland.

It localises to the secreted. This is U1-lycotoxin-Ls1l from Lycosa singoriensis (Wolf spider).